The primary structure comprises 319 residues: Olfactory receptor 8U8 (319 aa).

Over 1 to 28 (MAHINCTQATEFILVGLTDHQELKMPLF) the chain is Extracellular. N-linked (GlcNAc...) asparagine glycosylation occurs at N5. The helical transmembrane segment at 29–49 (VLFLSIYLFTVVGNLGLILLI) threads the bilayer. The Cytoplasmic portion of the chain corresponds to 50–56 (RADTSLN). A helical membrane pass occupies residues 57–77 (TPMYFFLSNLAFVDFCYSSVI). At 78–97 (TPKMLGNFLYKQNVISFDAC) the chain is on the extracellular side. Residues C97 and C179 are joined by a disulfide bond. A helical transmembrane segment spans residues 98-118 (ATQLGCFLTFMVSESLLLASM). The Cytoplasmic segment spans residues 119-122 (AYDR). A helical transmembrane segment spans residues 123 to 143 (YVAICNPLLYMVVMTPGICIQ). The Extracellular segment spans residues 144–204 (LVAVPYSYSF…KQLWILACAG (61 aa)). Residues 205-225 (ITFICSVLIVFVSYMFIIFAI) traverse the membrane as a helical segment. The Cytoplasmic segment spans residues 226–239 (LRMSSAEGRRKAFS). A helical membrane pass occupies residues 240-260 (TCSSHMLAVTIFYGTLIFMYL). Residues 261–271 (QPSSSHSLDAD) are Extracellular-facing. Residues 272–292 (KMASVFYTVIIPMLNPLIYSL) traverse the membrane as a helical segment. Residues 293-319 (RNKDVKDALKKVIINRNHAFIFLKLRK) are Cytoplasmic-facing.

This sequence belongs to the G-protein coupled receptor 1 family.

It localises to the cell membrane. Its function is as follows. Odorant receptor. This is Olfactory receptor 8U8 (OR8U8) from Homo sapiens (Human).